Consider the following 178-residue polypeptide: CDP-archaeol synthase (178 aa).

A run of 5 helical transmembrane segments spans residues 3-23 (LLLLLFSALWYILPAYVANAV), 56-76 (FFGILFGIITGILQHFIVILY), 91-111 (IILSFLLATGALFGDMLGSFI), 131-151 (FIIFALLFAYSLYPVPANIIV), and 152-172 (LLLVISPIIHFSSNIIAYKLH).

It belongs to the CDP-archaeol synthase family. It depends on Mg(2+) as a cofactor.

Its subcellular location is the cell membrane. It catalyses the reaction 2,3-bis-O-(geranylgeranyl)-sn-glycerol 1-phosphate + CTP + H(+) = CDP-2,3-bis-O-(geranylgeranyl)-sn-glycerol + diphosphate. It participates in membrane lipid metabolism; glycerophospholipid metabolism. Catalyzes the formation of CDP-2,3-bis-(O-geranylgeranyl)-sn-glycerol (CDP-archaeol) from 2,3-bis-(O-geranylgeranyl)-sn-glycerol 1-phosphate (DGGGP) and CTP. This reaction is the third ether-bond-formation step in the biosynthesis of archaeal membrane lipids. In Methanococcus maripaludis (strain DSM 14266 / JCM 13030 / NBRC 101832 / S2 / LL), this protein is CDP-archaeol synthase.